The primary structure comprises 352 residues: Biotin synthase (352 aa).

The 219-residue stretch at Asn44 to Lys262 folds into the Radical SAM core domain. Residues Cys59, Cys63, and Cys66 each coordinate [4Fe-4S] cluster. Cys103, Cys134, Cys194, and Arg266 together coordinate [2Fe-2S] cluster.

This sequence belongs to the radical SAM superfamily. Biotin synthase family. Homodimer. It depends on [4Fe-4S] cluster as a cofactor. The cofactor is [2Fe-2S] cluster.

It catalyses the reaction (4R,5S)-dethiobiotin + (sulfur carrier)-SH + 2 reduced [2Fe-2S]-[ferredoxin] + 2 S-adenosyl-L-methionine = (sulfur carrier)-H + biotin + 2 5'-deoxyadenosine + 2 L-methionine + 2 oxidized [2Fe-2S]-[ferredoxin]. It participates in cofactor biosynthesis; biotin biosynthesis; biotin from 7,8-diaminononanoate: step 2/2. In terms of biological role, catalyzes the conversion of dethiobiotin (DTB) to biotin by the insertion of a sulfur atom into dethiobiotin via a radical-based mechanism. In Pseudomonas putida (strain GB-1), this protein is Biotin synthase.